The primary structure comprises 494 residues: MFPSISNISLSPSSLFTAYASLTGFLMLFRSLFNDEVPERLRSYITDLLNRFFTPKSKNLTMVIDEIIGFKRNQVFDAAEVYLRNKIGPETARLRVGKLPKQKHFTIYIEKGEEILDTFENSELRWTYVESENEASQKEKRYYELTFEKKLRDKVMNSYLSHVVAESEETKRDLRAVKLYSRDVRASKDDDGMAGAGWGCINLEHPSTFETLAMDPGAKKKIIDDMERFLKRREFYKRVGKAWKRGYLLYGPPGTGKSSLIAAMANYLKFDVFDLELSSIYENAQLKSILLSTTNRSILVIEDIDCSSAEVVDREADEYQEYEEGYYGRVTLSGLLNFVDGLWSSFGDERIIVFTTNHKERLDPALLRPGRMDMHINMSYCTGLGFRTLVSNYLGLGGLNHPLCEEIEALIDSTEVTPAELAEELMQEDDTDVVLRGVVSFVENRKVEISKTKELEGSTCRKLDGDDKHNVSSTNDLKKTKKKKKGGKGKAKGN.

Residues serine 13–phenylalanine 29 form a helical membrane-spanning segment. Glycine 251 to serine 258 contacts ATP. The span at threonine 459–asparagine 470 shows a compositional bias: basic and acidic residues. The segment at threonine 459–asparagine 494 is disordered. A compositionally biased stretch (basic residues) spans lysine 479 to asparagine 494.

It belongs to the AAA ATPase family. BCS1 subfamily. Mg(2+) serves as cofactor.

It is found in the membrane. The catalysed reaction is ATP + H2O = ADP + phosphate + H(+). The protein is AAA-ATPase At2g18190 of Arabidopsis thaliana (Mouse-ear cress).